A 722-amino-acid polypeptide reads, in one-letter code: Lysophospholipid acyltransferase 6 (722 aa).

5 helical membrane passes run 25–45, 62–84, 104–123, 180–200, and 243–263; these read MVGLSVDLVNFLICQISALFL, LRHTFALSIGLAFGYFCFGQQAI, IVQRAVLLVAMSYLLCVHLM, ALEYFSYVWHFQSILAGPLVF, and KVVGSLVCAFIFMKFVKIYPV. Active-site residues include N349 and H381. The next 3 helical transmembrane spans lie at 378–398, 424–444, and 452–472; these read AVWHGFYPGYYLTFATGAVVV, ILTCLITRVVLGYATFPFVLL, and LYLRFYLCLHIISLVTIFILP. 2 stretches are compositionally biased toward polar residues: residues 485-511 and 549-570; these read NGNGNVRLSGSGNTKDAVTTSVESTAA and VEQPTEQPNNVNLRSRPQQQQP. Disordered regions lie at residues 485–582 and 650–687; these read NGNG…PTCA and NGAISLDSSNGGGLRKRNISSVHDNGTDPGHATADLHP.

It belongs to the membrane-bound acyltransferase family.

The protein localises to the endoplasmic reticulum. It is found in the membrane. The catalysed reaction is a 1-acyl-sn-glycero-3-phospho-L-serine + an acyl-CoA = a 1,2-diacyl-sn-glycero-3-phospho-L-serine + CoA. The enzyme catalyses 1-(9Z-octadecenoyl)-sn-glycero-3-phospho-L-serine + (9Z)-hexadecenoyl-CoA = 1-(9Z-octadecenoyl)-2-(9Z-hexadecenoyl)-sn-glycero-3-phospho-L-serine + CoA. It carries out the reaction 1-(9Z-octadecenoyl)-sn-glycero-3-phospho-L-serine + (9Z)-octadecenoyl-CoA = 1,2-di-(9Z)-octadecenoyl-sn-glycero-3-phospho-L-serine + CoA. It catalyses the reaction a 1-acyl-sn-glycero-3-phosphocholine + an acyl-CoA = a 1,2-diacyl-sn-glycero-3-phosphocholine + CoA. The catalysed reaction is 1-hexadecanoyl-sn-glycero-3-phosphocholine + (9Z)-octadecenoyl-CoA = 1-hexadecanoyl-2-(9Z-octadecenoyl)-sn-glycero-3-phosphocholine + CoA. The enzyme catalyses (9Z)-hexadecenoyl-CoA + 1-hexadecanoyl-sn-glycero-3-phosphocholine = 1-hexadecanoyl-2-(9Z-hexadecenoyl)-sn-glycero-3-phosphocholine + CoA. It carries out the reaction a 1-acyl-sn-glycero-3-phosphoethanolamine + an acyl-CoA = a 1,2-diacyl-sn-glycero-3-phosphoethanolamine + CoA. It catalyses the reaction 1-hexadecanoyl-sn-glycero-3-phosphoethanolamine + (9Z)-octadecenoyl-CoA = 1-hexadecanoyl-2-(9Z-octadecenoyl)-sn-glycero-3-phosphoethanolamine + CoA. The catalysed reaction is 1-hexadecanoyl-sn-glycero-3-phosphoethanolamine + (9Z,12Z)-octadecadienoyl-CoA = 1-hexadecanoyl-2-(9Z,12Z-octadecadienoyl)-sn-glycero-3-phosphoethanolamine + CoA. The enzyme catalyses 1-hexadecanoyl-sn-glycero-3-phosphoethanolamine + (9Z)-hexadecenoyl-CoA = 1-hexadecanoyl-2-(9Z)-hexadecenoyl-sn-glycero-3-phosphoethanolamine + CoA. It carries out the reaction 1-(9Z-octadecenoyl)-sn-glycero-3-phospho-(1'-sn-glycerol) + (9Z)-octadecenoyl-CoA = 1,2-di-(9Z-octadecenoyl)-sn-glycero-3-phospho-(1'-sn-glycerol) + CoA. Its pathway is lipid metabolism; phospholipid metabolism. In terms of biological role, acyltransferase with broad-specificity, that mediates the acylation of lysophospholipids to produce phospholipids (glycerophospholipids). Converts lysophosphatidylserine (1-acyl-2-hydroxy-sn-glycero-3-phospho-L-serine or LPS) to phosphatidylserine (1,2-diacyl-sn-glycero-3-phospho-L-serine or PS) (LPSAT activity), lysophosphatidylcholine (1-acyl-sn-glycero-3-phosphocholine or LPC) to phosphatidylcholine (1,2-diacyl-sn-glycero-3-phosphocholine or PC) (LPCAT activity), also lysophosphatidylethanolamine (1-acyl-sn-glycero-3-phosphochethanolamine or LPE) to phosphatidylchethanolamine (LPEAT activity) and lysophosphatidylglycerol (1-acyl-2-hydroxy-sn-glycero-3-phospho-(1'-sn-glycerol) or LPG) to phosphatidylglycerol (1,2-diacyl-sn-glycero-3-phospho-(1'-sn-glycerol) or PG) (LPGAT activity). Has a preference for unsaturated fatty acids of at least 16 carbons such as oleoyl-CoA ((9Z)-octadecenoyl-CoA) and palmitoleoyl-CoA ((9Z)-hexadecenoyl-CoA). Glycerophospholipids are important structural and functional components of cellular membrane, acyl-chain remodeling regulates the molecular species distribution of glycerophospholipids which can affect membrane fluidity and curvature. Essential for fertility and viability together with Nessy protein (Nes). The polypeptide is Lysophospholipid acyltransferase 6 (Drosophila melanogaster (Fruit fly)).